Reading from the N-terminus, the 486-residue chain is Cardiolipin synthase A (486 aa).

2 helical membrane-spanning segments follow: residues 3–23 (TFYT…IAGV) and 38–58 (MAWL…YLSV). PLD phosphodiesterase domains are found at residues 219 to 246 (MDLR…VDPR) and 399 to 426 (EGGL…DMRS). Residues His224, Lys226, Asp231, His404, Lys406, and Asp411 contribute to the active site.

This sequence belongs to the phospholipase D family. Cardiolipin synthase subfamily. ClsA sub-subfamily.

It localises to the cell inner membrane. The enzyme catalyses 2 a 1,2-diacyl-sn-glycero-3-phospho-(1'-sn-glycerol) = a cardiolipin + glycerol. Its function is as follows. Catalyzes the reversible phosphatidyl group transfer from one phosphatidylglycerol molecule to another to form cardiolipin (CL) (diphosphatidylglycerol) and glycerol. The chain is Cardiolipin synthase A from Salmonella gallinarum (strain 287/91 / NCTC 13346).